The chain runs to 563 residues: Minor fimbrium subunit Mfa1 (563 aa).

The first 19 residues, 1–19 (MKLNKMFLVGALLSLGFAS), serve as a signal peptide directing secretion. The N-palmitoyl cysteine moiety is linked to residue cysteine 20. Cysteine 20 is lipidated: S-diacylglycerol cysteine. Residues 20-49 (CSKEGNGPDPDNAAKSYMSMTLSMPMGSAR) constitute a propeptide that is removed on maturation. The interval 504–543 (LVPDPDPSNPENPNNPDPNPDEPGTPVPTDPENPLPDQDT) is disordered. Residues 505-537 (VPDPDPSNPENPNNPDPNPDEPGTPVPTDPENP) show a composition bias toward pro residues.

It belongs to the bacteroidetes fimbrillin superfamily. In terms of assembly, structural component of the fimbrial stalk. Minor fimbriae are composed of a structural subunit, most often Mfa1, and the accessory subunits Mfa3, Mfa4 and Mfa5. Mfa1 interacts with Mfa2; this anchors the fimbrium in the membrane. Fimbrium assembly occurs by linear, head-to-tail oligomerization of fimbrial subunits. This is mediated via insertion of a C-terminal beta-strand from one subunit into a groove in the N-terminal domain of the following subunit. Interacts with S.gordonii ssp5.

Its subcellular location is the fimbrium. The protein resides in the cell outer membrane. Its function is as follows. Structural subunit of the minor fimbriae. These filamentous pili are attached to the cell surface; they mediate biofilm formation, adhesion onto host cells and onto other bacteria that are part of the oral microbiome. They play an important role in invasion of periodontal tissues and are recognized as major virulence factors. Mfa1 orthologs from different strains have highly divergent sequences, and this correlates with pathogenicity. This is Minor fimbrium subunit Mfa1 from Porphyromonas gingivalis (strain ATCC 33277 / DSM 20709 / CIP 103683 / JCM 12257 / NCTC 11834 / 2561).